The following is a 558-amino-acid chain: Cytochrome P450 monooxygenase sdnT (558 aa).

A helical transmembrane segment spans residues 21 to 41 (IISLTTCFVCAFAVSFVALAI). Residues 298–317 (QNAGSNTRPKPPKRKQDTQP) are disordered. 2 N-linked (GlcNAc...) asparagine glycosylation sites follow: N464 and N495. C505 contributes to the heme binding site.

This sequence belongs to the cytochrome P450 family. Requires heme as cofactor.

Its subcellular location is the membrane. It functions in the pathway antibiotic biosynthesis. Its function is as follows. Cytochrome P450 monooxygenase; part of the gene cluster that mediates the biosynthesis of sordarin and hypoxysordarin, glycoside antibiotics with a unique tetracyclic diterpene aglycone structure. First, the geranylgeranyl diphosphate synthase sdnC constructs GGDP from farnesyl diphosphate and isopentenyl diphosphate. The diterpene cyclase sdnA then catalyzes the cyclization of GGDP to afford cycloaraneosene. Cycloaraneosene is then hydroxylated four times by the putative cytochrome P450 monooxygenases sdnB, sdnE, sdnF and sdnH to give a hydroxylated cycloaraneosene derivative such as cycloaraneosene-8,9,13,19-tetraol. Although the order of the hydroxylations is unclear, at least C8, C9 and C13 of the cycloaraneosene skeleton are hydroxylated before the sordaricin formation. Dehydration of the 13-hydroxy group of the hydroxylated cycloaraneosene derivative might be catalyzed by an unassigned hypothetical protein such as sdnG and sdnP to construct the cyclopentadiene moiety. The FAD-dependent oxidoreductase sdnN is proposed to catalyze the oxidation at C9 of the hydroxylated cycloaraneosene derivative and also catalyze the Baeyer-Villiger oxidation to give the lactone intermediate. The presumed lactone intermediate would be hydrolyzed to give an acrolein moiety and a carboxylate moiety. Then, [4+2]cycloaddition would occur between the acrolein moiety and the cyclopentadiene moiety to give sordaricin. SdnN might also be involved in the [4+2]cycloaddition after the hypothesized oxidation to accommodate the oxidized product and prompt the [4+2]cycloaddition. GDP-6-deoxy-D-altrose may be biosynthesized from GDP-D-mannose by the putative GDP-mannose-4,6-dehydratase sdnI and the short-chain dehydrogenase sdnK. The glycosyltransferase sdnJ catalyzes the attachment of 6-deoxy-D-altrose onto the 19-hydroxy group of sordaricin to give 4'-O-demethylsordarin. The methyltransferase sdnD would complete the biosynthesis of sordarin. Sordarin can be further modified into hypoxysordarin. The unique acyl chain at the 3'-hydroxy group of hypoxysordarin would be constructed by an iterative type I PKS sdnO and the trans-acting polyketide methyltransferase sdnL. SdnL would be responsible for the introduction of an alpha-methyl group of the polyketide chain. Alternatively, the beta-lactamase-like protein sdnR might be responsible for the cleavage and transfer of the polyketide chain from the PKS sdnO to sordarin. Two putative cytochrome P450 monooxygenases, sdnQ and sdnT, might catalyze the epoxidations of the polyketide chain to complete the biosynthesis of hypoxysordarin. Transcriptional regulators sdnM and sdnS are presumably encoded for the transcriptional regulation of the expression of the sdn gene cluster. The chain is Cytochrome P450 monooxygenase sdnT from Sordaria araneosa (Pleurage araneosa).